The sequence spans 287 residues: Protease HtpX (287 aa).

Helical transmembrane passes span 4–24 and 33–53; these read IFLLIATNMAILLVASIVMSI and GGLLVFAAIFGFGGAFISLAI. His139 contacts Zn(2+). Residue Glu140 is part of the active site. His143 lines the Zn(2+) pocket. 2 helical membrane passes run 154 to 174 and 195 to 215; these read LIQGVVNTFVIFAARVVAGII and AVVFVLDMLFGILASIIVAYF. Glu220 contacts Zn(2+).

Belongs to the peptidase M48B family. Zn(2+) is required as a cofactor.

It localises to the cell inner membrane. The chain is Protease HtpX from Shewanella halifaxensis (strain HAW-EB4).